The following is a 576-amino-acid chain: uncharacterized protein (576 aa).

Residues 1-8 are Cytoplasmic-facing; sequence MSLSLGAA. A helical transmembrane segment spans residues 9-29; that stretch reads IYIALKPIFKIYTIMLVGYLV. Residues 30-45 lie on the Extracellular side of the membrane; the sequence is AKFDIVSMENAKGISN. Residues 46 to 66 traverse the membrane as a helical segment; it reads MVVNAILPCLTFNKIVSNISW. The Cytoplasmic portion of the chain corresponds to 67–71; the sequence is RDIKE. A helical membrane pass occupies residues 72–92; that stretch reads IGVIILSAFILFVLGATGALF. The Extracellular segment spans residues 93–103; sequence TTFATTVPKKF. Residues 104–124 traverse the membrane as a helical segment; that stretch reads FWGLIFAGFFPNISDLPIAYI. The Cytoplasmic portion of the chain corresponds to 125–141; it reads QSMGNGSIFTAEEADKG. A helical membrane pass occupies residues 142-162; it reads VAYSCIFLFIQSFLMMNFGMW. Residues 163 to 400 lie on the Extracellular side of the membrane; it reads RVVGLDFRDT…FIINCLRPAS (238 aa). The chain crosses the membrane as a helical span at residues 401–421; it reads LGAILGIICALIPWVKACFVT. Topologically, residues 422-437 are cytoplasmic; that stretch reads TYVHVHKAPDGEPVLN. A helical transmembrane segment spans residues 438–458; that stretch reads FLMDFTEYIGNACVPLGLLLL. Topologically, residues 459–476 are extracellular; the sequence is GGTLARLEIKSLPPGFIK. Residues 477-497 traverse the membrane as a helical segment; the sequence is SALLMTCFRLIVIPIIGVLWV. The Cytoplasmic segment spans residues 498–512; it reads NKLYSIDWLDTGIGK. A helical membrane pass occupies residues 513-533; it reads FDMILTWSMPSATAQVYFTAF. Topologically, residues 534–545 are extracellular; it reads YTPACGDHIQMN. A helical transmembrane segment spans residues 546-566; the sequence is CLSVLFVMQYAILFITVAFVV. The Cytoplasmic portion of the chain corresponds to 567–576; sequence TYTLKVDLKV.

It belongs to the auxin efflux carrier (TC 2.A.69) family.

It localises to the membrane. This is an uncharacterized protein from Saccharomyces cerevisiae (strain ATCC 204508 / S288c) (Baker's yeast).